The sequence spans 283 residues: Phosphatidylglycerol--prolipoprotein diacylglyceryl transferase (283 aa).

The next 4 helical transmembrane spans lie at 17-37, 56-76, 92-112, and 117-137; these read LAVRWYALSYILGFILFTFLG, FLTWGILGVILGGRLGYVLFY, WEGGMSFHGGFLGVVIAIWLF, and GIGFLKLMDTVAPLVPLGLAS. Residue Arg-139 participates in a 1,2-diacyl-sn-glycero-3-phospho-(1'-sn-glycerol) binding. Transmembrane regions (helical) follow at residues 194–214, 222–242, and 255–275; these read PSQLYQFALEGICLFAVVWLF, GQVASLFLGGYGIFRFIAEFA, and GLSMGQWLSVPMIVLGIVGFV.

Belongs to the Lgt family.

The protein localises to the cell inner membrane. It carries out the reaction L-cysteinyl-[prolipoprotein] + a 1,2-diacyl-sn-glycero-3-phospho-(1'-sn-glycerol) = an S-1,2-diacyl-sn-glyceryl-L-cysteinyl-[prolipoprotein] + sn-glycerol 1-phosphate + H(+). The protein operates within protein modification; lipoprotein biosynthesis (diacylglyceryl transfer). Functionally, catalyzes the transfer of the diacylglyceryl group from phosphatidylglycerol to the sulfhydryl group of the N-terminal cysteine of a prolipoprotein, the first step in the formation of mature lipoproteins. This Neisseria meningitidis serogroup A / serotype 4A (strain DSM 15465 / Z2491) protein is Phosphatidylglycerol--prolipoprotein diacylglyceryl transferase.